A 173-amino-acid chain; its full sequence is Photosystem I assembly protein Ycf3 (173 aa).

3 TPR repeats span residues 35 to 68 (AFSY…EEDP), 72 to 105 (SYIL…NFKL), and 120 to 153 (GVQA…APDN).

Belongs to the Ycf3 family.

Its subcellular location is the plastid. The protein localises to the chloroplast thylakoid membrane. Its function is as follows. Essential for the assembly of the photosystem I (PSI) complex. May act as a chaperone-like factor to guide the assembly of the PSI subunits. This chain is Photosystem I assembly protein Ycf3, found in Pyropia yezoensis (Susabi-nori).